The following is a 498-amino-acid chain: Cytochrome P450 monooxygenase 110 (498 aa).

A helical membrane pass occupies residues 7–24; that stretch reads YVFALLGILATLYFVRWS. N-linked (GlcNAc...) asparagine glycosylation is present at Asn-425. Cys-440 is a heme binding site.

Belongs to the cytochrome P450 family. Requires heme as cofactor.

It is found in the membrane. The protein operates within secondary metabolite biosynthesis. In terms of biological role, cytochrome P450 monooxygenase that is able to use dehydroabietic acid and testosterone as substrates for oxidation, suggesting that the natural substrate(s) may be structurally related to steroid compounds. The sequence is that of Cytochrome P450 monooxygenase 110 from Postia placenta (strain ATCC 44394 / Madison 698-R) (Brown rot fungus).